Here is a 593-residue protein sequence, read N- to C-terminus: Mitoguardin 2 (593 aa).

Transmembrane regions (helical) follow at residues 11–31 and 42–62; these read MIQA…TTFG and PGLR…ALAA. Disordered regions lie at residues 103 to 141 and 196 to 231; these read GYSS…VASM and SVGQ…SQRK. Low complexity-rich tracts occupy residues 106-116 and 123-141; these read SRRVQSPSSKS and ISSI…VASM. The residue at position 132 (serine 132) is a Phosphoserine. Threonine 206 carries the phosphothreonine modification. Residues serine 220, serine 224, and serine 228 each carry the phosphoserine modification. The residue at position 273 (threonine 273) is a Phosphothreonine. A phosphoserine mark is found at serine 276 and serine 295. An FFAT motif is present at residues 292 to 298; the sequence is SFFSATE.

Belongs to the mitoguardin family. In terms of assembly, homodimer and heterodimer; forms heterodimers with MIGA1. Interacts with PLD6/MitoPLD. Interacts (via phosphorylated FFAT motif) with MOSPD2, VAPA and VAPB. In terms of processing, phosphorylation at Ser-295 of the FFAT motif activates interaction with MOSPD2, VAPA and VAPB.

The protein resides in the mitochondrion outer membrane. Functionally, regulator of mitochondrial fusion: acts by forming homo- and heterodimers at the mitochondrial outer membrane and facilitating the formation of PLD6/MitoPLD dimers. May act by regulating phospholipid metabolism via PLD6/MitoPLD. This Homo sapiens (Human) protein is Mitoguardin 2.